A 548-amino-acid chain; its full sequence is 2-succinyl-5-enolpyruvyl-6-hydroxy-3-cyclohexene-1-carboxylate synthase (548 aa).

This sequence belongs to the TPP enzyme family. MenD subfamily. Homodimer. It depends on Mg(2+) as a cofactor. Mn(2+) serves as cofactor. Thiamine diphosphate is required as a cofactor.

It carries out the reaction isochorismate + 2-oxoglutarate + H(+) = 5-enolpyruvoyl-6-hydroxy-2-succinyl-cyclohex-3-ene-1-carboxylate + CO2. Its pathway is quinol/quinone metabolism; 1,4-dihydroxy-2-naphthoate biosynthesis; 1,4-dihydroxy-2-naphthoate from chorismate: step 2/7. It functions in the pathway quinol/quinone metabolism; menaquinone biosynthesis. Its function is as follows. Catalyzes the thiamine diphosphate-dependent decarboxylation of 2-oxoglutarate and the subsequent addition of the resulting succinic semialdehyde-thiamine pyrophosphate anion to isochorismate to yield 2-succinyl-5-enolpyruvyl-6-hydroxy-3-cyclohexene-1-carboxylate (SEPHCHC). The sequence is that of 2-succinyl-5-enolpyruvyl-6-hydroxy-3-cyclohexene-1-carboxylate synthase from Mycobacterium marinum (strain ATCC BAA-535 / M).